A 383-amino-acid chain; its full sequence is Acetylornithine deacetylase (383 aa).

Position 80 (histidine 80) interacts with Zn(2+). The active site involves aspartate 82. Aspartate 112 contributes to the Zn(2+) binding site. Residue glutamate 144 is part of the active site. Residues glutamate 145, glutamate 169, and histidine 355 each contribute to the Zn(2+) site.

Belongs to the peptidase M20A family. ArgE subfamily. In terms of assembly, homodimer. Requires Zn(2+) as cofactor. Co(2+) is required as a cofactor. The cofactor is glutathione.

The protein localises to the cytoplasm. It catalyses the reaction N(2)-acetyl-L-ornithine + H2O = L-ornithine + acetate. It participates in amino-acid biosynthesis; L-arginine biosynthesis; L-ornithine from N(2)-acetyl-L-ornithine (linear): step 1/1. Its function is as follows. Catalyzes the hydrolysis of the amide bond of N(2)-acetylated L-amino acids. Cleaves the acetyl group from N-acetyl-L-ornithine to form L-ornithine, an intermediate in L-arginine biosynthesis pathway, and a branchpoint in the synthesis of polyamines. The polypeptide is Acetylornithine deacetylase (Escherichia coli O139:H28 (strain E24377A / ETEC)).